Here is a 68-residue protein sequence, read N- to C-terminus: Large ribosomal subunit protein uL29 (68 aa).

It belongs to the universal ribosomal protein uL29 family.

The chain is Large ribosomal subunit protein uL29 from Streptococcus pneumoniae (strain JJA).